Here is a 258-residue protein sequence, read N- to C-terminus: Peroxisomal membrane protein 11B (258 aa).

The residue at position 43 (Lys43) is an N6-acetyllysine. The tract at residues 210–258 is interaction with PEX19, PEX11G and FIS1 and peroxisome targeting; sequence VVRNACDLFIPLDKLGLWRCGPGIVGLCGLVSSILSILTLICPWLRLKP. A helical transmembrane segment spans residues 232–254; that stretch reads GIVGLCGLVSSILSILTLICPWL.

It belongs to the peroxin-11 family. In terms of assembly, homodimer. Heterodimer with PEX11G. Interacts with PEX19. Interacts with FIS1.

The protein localises to the peroxisome membrane. Functionally, involved in peroxisomal proliferation. May regulate peroxisome division by recruiting the dynamin-related GTPase DNM1L to the peroxisomal membrane. Promotes membrane protrusion and elongation on the peroxisomal surface. The sequence is that of Peroxisomal membrane protein 11B (PEX11B) from Bos taurus (Bovine).